A 503-amino-acid polypeptide reads, in one-letter code: REST corepressor 2 (503 aa).

The interval methionine 1–serine 62 is disordered. An ELM2 domain is found at serine 41–threonine 126. The 52-residue stretch at proline 127–serine 178 folds into the SANT 1 domain. Coiled-coil stretches lie at residues valine 182 to lysine 206 and glutamine 286 to glycine 314. In terms of domain architecture, SANT 2 spans lysine 327–asparagine 378. Residues glutamate 385–serine 503 form a disordered region. Residues threonine 399–proline 412 are compositionally biased toward polar residues. Positions serine 423–serine 442 are enriched in low complexity.

It belongs to the CoREST family.

It localises to the nucleus. May act as a component of a corepressor complex that represses transcription. The sequence is that of REST corepressor 2 (rcor2) from Xenopus laevis (African clawed frog).